Here is a 120-residue protein sequence, read N- to C-terminus: Jacalin-related lectin 39 (120 aa).

The region spanning 6 to 120 (SRDHADFVAH…KRTFDFGGFN (115 aa)) is the Jacalin-type lectin domain.

This sequence belongs to the jacalin lectin family.

The sequence is that of Jacalin-related lectin 39 (JAL39) from Arabidopsis thaliana (Mouse-ear cress).